Here is a 381-residue protein sequence, read N- to C-terminus: ADP,ATP carrier protein 1, mitochondrial (381 aa).

The N-terminal 70 residues, 1-70 (MVDQVQHPTI…ATTASPVFVQ (70 aa)), are a transit peptide targeting the mitochondrion. Solcar repeat units follow at residues 78-171 (TNFA…FKRL), 183-276 (KWFA…VKPV), and 284-370 (DSFF…LQLI). 5 consecutive transmembrane segments (helical) span residues 80-107 (FALDFLMGGVSAAVSKTAAAPIERVKLL), 148-172 (TANVIRYFPTQALNFAFKDYFKRLF), 181-201 (YWKWFAGNLASGGAAGASSLL), 252-273 (FNISCVGIIVYRGLYFGLYDSV), and 287-307 (FASFALGWVITNGAGLASYPI). Positions 153 and 165 each coordinate ADP. Residue Arg-311 coordinates ADP. The segment at 311 to 316 (RRRMMM) is important for transport activity. The Nucleotide carrier signature motif motif lies at 311 to 316 (RRRMMM). A helical membrane pass occupies residues 347–367 (AGANILRAVAGAGVLSGYDKL).

This sequence belongs to the mitochondrial carrier (TC 2.A.29) family. Monomer.

The protein localises to the mitochondrion inner membrane. The catalysed reaction is ADP(in) + ATP(out) = ADP(out) + ATP(in). With respect to regulation, the matrix-open state (m-state) is inhibited by the membrane-permeable bongkrekic acid (BKA). The cytoplasmic-open state (c-state) is inhibited by the membrane-impermeable toxic inhibitor carboxyatractyloside (CATR). Its function is as follows. ADP:ATP antiporter that mediates import of ADP into the mitochondrial matrix for ATP synthesis, and export of ATP out to fuel the cell. Cycles between the cytoplasmic-open state (c-state) and the matrix-open state (m-state): operates by the alternating access mechanism with a single substrate-binding site intermittently exposed to either the cytosolic (c-state) or matrix (m-state) side of the inner mitochondrial membrane. The protein is ADP,ATP carrier protein 1, mitochondrial (AAC1) of Arabidopsis thaliana (Mouse-ear cress).